Here is a 298-residue protein sequence, read N- to C-terminus: 3-deoxy-manno-octulosonate cytidylyltransferase (298 aa).

Residues 22–42 (VWVLHGLALGAAAAAAAVAYL) traverse the membrane as a helical segment.

The protein belongs to the KdsB family. Requires Mg(2+) as cofactor. Ubiquitous.

Its subcellular location is the membrane. The enzyme catalyses 3-deoxy-alpha-D-manno-oct-2-ulosonate + CTP = CMP-3-deoxy-beta-D-manno-octulosonate + diphosphate. It functions in the pathway nucleotide-sugar biosynthesis; CMP-3-deoxy-D-manno-octulosonate biosynthesis; CMP-3-deoxy-D-manno-octulosonate from 3-deoxy-D-manno-octulosonate and CTP: step 1/1. Catalyzes the production of the sugar nucleotide CMP-3-deoxy-D-manno-octulosonate (CMP-KDO). CTP is the preferred nucleotide donor, and it can partially be replaced with UTP but not with ATP. Activates KDO during the biosynthesis of rhamnogalacturonan II (RG-II), a structurally complex pectic polysaccharide of the primary cell wall. RG-II is essential for the cell wall integrity of rapidly growing tissues and pollen tube growth and elongation. This Zea mays (Maize) protein is 3-deoxy-manno-octulosonate cytidylyltransferase.